Here is a 218-residue protein sequence, read N- to C-terminus: N-(5'-phosphoribosyl)anthranilate isomerase (218 aa).

The protein belongs to the TrpF family.

It catalyses the reaction N-(5-phospho-beta-D-ribosyl)anthranilate = 1-(2-carboxyphenylamino)-1-deoxy-D-ribulose 5-phosphate. It functions in the pathway amino-acid biosynthesis; L-tryptophan biosynthesis; L-tryptophan from chorismate: step 3/5. The sequence is that of N-(5'-phosphoribosyl)anthranilate isomerase from Desulfatibacillum aliphaticivorans.